The following is a 289-amino-acid chain: ATP synthase gamma chain (289 aa).

Belongs to the ATPase gamma chain family. F-type ATPases have 2 components, CF(1) - the catalytic core - and CF(0) - the membrane proton channel. CF(1) has five subunits: alpha(3), beta(3), gamma(1), delta(1), epsilon(1). CF(0) has three main subunits: a, b and c.

It localises to the cell inner membrane. In terms of biological role, produces ATP from ADP in the presence of a proton gradient across the membrane. The gamma chain is believed to be important in regulating ATPase activity and the flow of protons through the CF(0) complex. The protein is ATP synthase gamma chain of Histophilus somni (strain 129Pt) (Haemophilus somnus).